Here is a 341-residue protein sequence, read N- to C-terminus: Enduracididine beta-hydroxylase (341 aa).

Residues His-146 and Glu-148 each coordinate Fe cation. Residues 203–223 form a disordered region; it reads HRIHGKAPGDESARESALRER. A Fe cation-binding site is contributed by His-300.

The protein belongs to the clavaminate synthase family. It depends on Fe(2+) as a cofactor.

It carries out the reaction L-enduracididine + 2-oxoglutarate + O2 = (3S)-3-hydroxy-L-enduracididine + succinate + CO2. It functions in the pathway antibiotic biosynthesis. Functionally, hydroxylates the beta carbon of free L-enduracididine to produce (3S)-3-hydroxy-L-enduracididine in biosynthesis of the nonproteinogenic amino acid beta-hydroxyenduracididine, a component of antibiotic mannopeptimycin. The sequence is that of Enduracididine beta-hydroxylase (mppO) from Streptomyces hygroscopicus.